Consider the following 1113-residue polypeptide: Potassium channel subfamily U member 1 (1113 aa).

Residues 1–24 are Extracellular-facing; the sequence is MSQTLLDNLNKKELTETSCTIEIQ. Residues 25-45 traverse the membrane as a helical segment; it reads AAFILSSLATFFGGLIVLFIF. Residues 46-101 are Cytoplasmic-facing; sequence RIALKISRNWKTVKGPRGILELFSSRRIEVNPLRKLYFHGVFRERIEMLLSAQTIV. The chain crosses the membrane as a helical span at residues 102-122; it reads GQVLVILVFVLSIGSLVIYFI. The Extracellular portion of the chain corresponds to 123–137; it reads NSMDPVRKCSSYEDK. Residues 138–158 traverse the membrane as a helical segment; the sequence is IVHVDLSFNAFFSFYFGLRFW. Residues 159 to 165 lie on the Cytoplasmic side of the membrane; the sequence is AAEDKIK. A helical membrane pass occupies residues 166–186; the sequence is FWLEMNSIVDIFTIPPTFISY. Residues 187–188 lie on the Extracellular side of the membrane; the sequence is YL. A helical; Voltage-sensor transmembrane segment spans residues 189-209; sequence KSNWLGLRFLRALRLLELPKI. Residues 210–226 are Cytoplasmic-facing; that stretch reads LQILQVIKTSNSVKLSK. Residues 227 to 247 form a helical membrane-spanning segment; it reads LMSIVISTWFTAAGFLHLVEN. The Extracellular segment spans residues 248–259; it reads SGDPWLNGRNSQ. An intramembrane region (pore-forming) is located at residues 260-282; it reads TMSYFESIYLVTATMSTVGFGDV. At 283–290 the chain is on the extracellular side; it reads VAKTSLGR. A helical transmembrane segment spans residues 291–311; the sequence is IFIVFFTLGSLILFANYIPEM. Residues 312-1113 are Cytoplasmic-facing; sequence VELFSTRKKY…FDASDIDPGK (802 aa). 2 consecutive RCK N-terminal domains span residues 331–473 and 710–881; these read KKFI…DNII and QNHI…DEAI. A compositionally biased stretch (polar residues) spans 1047-1081; it reads ASIQDQDTTTNVTSMSQGSNFQGAQSALNEHSLSP. Residues 1047–1091 are disordered; that stretch reads ASIQDQDTTTNVTSMSQGSNFQGAQSALNEHSLSPASAMGEKKSP.

It belongs to the potassium channel family. Calcium-activated (TC 1.A.1.3) subfamily. KCa1.1/KCNMA1 sub-subfamily. As to quaternary structure, homotetramer; which constitutes the activated potassium channel. Interacts with LRRC52; this interaction changes channel gating properties, such as shifting gating to more negative potentials at a given pH.

It localises to the cell membrane. Its subcellular location is the cell projection. The protein resides in the cilium. The protein localises to the flagellum membrane. It carries out the reaction K(+)(in) = K(+)(out). With respect to regulation, regulated by changes in cytosolic pH; activated by alkalization. Not activated by intracellular Ca(2+). VU0546110 acts as a selective inhibitor. The auxiliary subunit LRRC52 shifts the activation of KCNU1 to more negative potentials at a given pH. Functionally, testis-specific potassium channel activated by both intracellular pH and membrane voltage that mediates export of K(+). Represents the primary spermatozoan K(+) current. The channel underlies a pH-triggered membrane hyperpolarization during the process of sperm capacitation, as sperm encounter the alkaline environment near the ovum in the female reproductive tract, thereby playing an essential for male fertility. This is Potassium channel subfamily U member 1 (Kcnu1) from Rattus norvegicus (Rat).